A 221-amino-acid chain; its full sequence is MALPNQQTVDYPSFKLVIVGDGGTGKTTFVKRHLTGEFEKKYEPTIGVEVHPLDFFTNCGKIRFYCWDTAGQEKFGGLRDGYYIHGQCAIIMFDVTARLTYKNVPTWHRDLCRVCENIPIVLCGNKVDVKNRQVKAKQVTFHRKKNLQYYEISAKSNYNFEKPFLYLARKLAGDANLHFVESPALAPPEVQIDLAAQQQHEAELAAAASQPLPDDDDDTFE.

Residues 10-174 form the Small GTPase Ran-type domain; the sequence is DYPSFKLVIV…LYLARKLAGD (165 aa). GTP is bound at residue 21-28; that stretch reads DGGTGKTT. The segment at 40 to 48 is switch-I; that stretch reads KKYEPTIGV. Residues Gly71, 125–128, and 153–155 each bind GTP; these read NKVD and SAK. A switch-II region spans residues 71-87; sequence GQEKFGGLRDGYYIHGQ. Positions 201–221 are disordered; that stretch reads EAELAAAASQPLPDDDDDTFE.

This sequence belongs to the small GTPase superfamily. Ran family. Found in a nuclear export complex with RanGTP, exportin and pre-miRNA. Interacts with RanBP1a and RanBP1b. Interacts with KPNB1.

Its subcellular location is the nucleus. In terms of biological role, GTP-binding protein involved in nucleocytoplasmic transport. Required for the import of protein into the nucleus and also for RNA export. Involved in chromatin condensation and control of cell cycle. In Arabidopsis thaliana (Mouse-ear cress), this protein is GTP-binding nuclear protein Ran-3 (RAN3).